The sequence spans 119 residues: Large ribosomal subunit protein bL20 (119 aa).

Belongs to the bacterial ribosomal protein bL20 family.

In terms of biological role, binds directly to 23S ribosomal RNA and is necessary for the in vitro assembly process of the 50S ribosomal subunit. It is not involved in the protein synthesizing functions of that subunit. The chain is Large ribosomal subunit protein bL20 from Brevibacillus brevis (strain 47 / JCM 6285 / NBRC 100599).